The chain runs to 808 residues: LisH domain-containing protein ARMC9 (808 aa).

Residues 7–39 (YEADLLGLVKEFLNFGEFQETLETFTKECKTKG) form the LisH domain. Residues 196–230 (ITLYKESLHNNQELLQQLQQQLMETEHKARTYKKC) adopt a coiled-coil conformation. 3 disordered regions span residues 576–599 (FDESIESDDEEEEKDDEEDEDALE), 650–709 (PLQR…DYCV), and 742–808 (GMEK…SYRK). A compositionally biased stretch (acidic residues) spans 579-599 (SIESDDEEEEKDDEEDEDALE). Polar residues-rich tracts occupy residues 655–668 (VTPSTHRVMNTVRK), 677–709 (TNTFKTSQANMSVVSSRPPTRSGSRASTSDYCV), and 775–784 (IAPQFSQSGP). Low complexity predominate over residues 785–808 (QQTSYSSSAGSSTRSRQSTQSYRK).

The protein localises to the cytoplasm. It localises to the cytoskeleton. The protein resides in the cilium basal body. Its subcellular location is the cell projection. It is found in the cilium. The protein localises to the microtubule organizing center. It localises to the centrosome. The protein resides in the centriole. In terms of biological role, involved in ciliogenesis. It is required for appropriate acetylation and polyglutamylation of ciliary microtubules, and regulation of cilium length. Acts as a positive regulator of hedgehog (Hh)signaling. In Xenopus tropicalis (Western clawed frog), this protein is LisH domain-containing protein ARMC9 (armc9).